Reading from the N-terminus, the 77-residue chain is Exodeoxyribonuclease 7 small subunit (77 aa).

Belongs to the XseB family. As to quaternary structure, heterooligomer composed of large and small subunits.

The protein resides in the cytoplasm. The catalysed reaction is Exonucleolytic cleavage in either 5'- to 3'- or 3'- to 5'-direction to yield nucleoside 5'-phosphates.. Functionally, bidirectionally degrades single-stranded DNA into large acid-insoluble oligonucleotides, which are then degraded further into small acid-soluble oligonucleotides. In Trichlorobacter lovleyi (strain ATCC BAA-1151 / DSM 17278 / SZ) (Geobacter lovleyi), this protein is Exodeoxyribonuclease 7 small subunit.